The sequence spans 69 residues: U2-agatoxin-Ao1c (69 aa).

An N-terminal signal peptide occupies residues 1-20 (MKAIISLLLISAMVFSMIEA). Positions 21–34 (VPVEEGLQLFEGER) are excised as a propeptide. 3 disulfides stabilise this stretch: Cys-36-Cys-52, Cys-43-Cys-57, and Cys-51-Cys-67. Leucine amide is present on Leu-68.

This sequence belongs to the neurotoxin 01 (U2-agtx) family. As to expression, expressed by the venom gland.

It localises to the secreted. Its function is as follows. Insect active toxin causing rapid but reversible paralysis in crickets. No activity shown in mammals. Does not show effect on mammalian voltage-gated calcium channels. The polypeptide is U2-agatoxin-Ao1c (Agelena orientalis (Funnel-web spider)).